The primary structure comprises 326 residues: MTKIRSVVLGCGSYLPEQVVTNAQLAARIDTSDEWIVQRTGIRERHIAAEGEFTSHLAIKAAQAALTDAGVDAQSIDLIVLATSTPDNTFPATAVAVQHGLGINHGAAFDLQAVCSGFVFALATADNFLRTGAFKRALVIGAETFSRILDWNDRGTCVLFGDGAGAVVLEAQEQPGSAATDRGVVTTHLRSDGRHKAKLFVDGGPSSTQTVGHLRMEGREVFKHAVGMITDVIVDAFEATGLNADSIDWFVPHQANKRIIDASAHKLHIAPEKVVLTVDRHGNTSAASIPLALAVARKDGRIKRGDLILLEAMGGGFTWGSALVRW.

Catalysis depends on residues cysteine 115 and histidine 253. An ACP-binding region spans residues 254–258 (QANKR). Residue asparagine 283 is part of the active site.

The protein belongs to the thiolase-like superfamily. FabH family. Homodimer.

Its subcellular location is the cytoplasm. It catalyses the reaction malonyl-[ACP] + acetyl-CoA + H(+) = 3-oxobutanoyl-[ACP] + CO2 + CoA. It participates in lipid metabolism; fatty acid biosynthesis. Functionally, catalyzes the condensation reaction of fatty acid synthesis by the addition to an acyl acceptor of two carbons from malonyl-ACP. Catalyzes the first condensation reaction which initiates fatty acid synthesis and may therefore play a role in governing the total rate of fatty acid production. Possesses both acetoacetyl-ACP synthase and acetyl transacylase activities. Its substrate specificity determines the biosynthesis of branched-chain and/or straight-chain of fatty acids. The chain is Beta-ketoacyl-[acyl-carrier-protein] synthase III from Bradyrhizobium diazoefficiens (strain JCM 10833 / BCRC 13528 / IAM 13628 / NBRC 14792 / USDA 110).